Here is a 296-residue protein sequence, read N- to C-terminus: Phosphoribosylaminoimidazole-succinocarboxamide synthase (296 aa).

It belongs to the SAICAR synthetase family.

It catalyses the reaction 5-amino-1-(5-phospho-D-ribosyl)imidazole-4-carboxylate + L-aspartate + ATP = (2S)-2-[5-amino-1-(5-phospho-beta-D-ribosyl)imidazole-4-carboxamido]succinate + ADP + phosphate + 2 H(+). It participates in purine metabolism; IMP biosynthesis via de novo pathway; 5-amino-1-(5-phospho-D-ribosyl)imidazole-4-carboxamide from 5-amino-1-(5-phospho-D-ribosyl)imidazole-4-carboxylate: step 1/2. The chain is Phosphoribosylaminoimidazole-succinocarboxamide synthase from Thioalkalivibrio sulfidiphilus (strain HL-EbGR7).